We begin with the raw amino-acid sequence, 500 residues long: Ribose import ATP-binding protein RbsA (500 aa).

ABC transporter domains are found at residues 3–239 (IEMK…VGRE) and 246–493 (DRTP…TGGV). 35–42 (GENGAGKS) is a binding site for ATP.

This sequence belongs to the ABC transporter superfamily. Ribose importer (TC 3.A.1.2.1) family. As to quaternary structure, the complex is composed of an ATP-binding protein (RbsA), two transmembrane proteins (RbsC) and a solute-binding protein (RbsB).

Its subcellular location is the cell membrane. The catalysed reaction is D-ribose(out) + ATP + H2O = D-ribose(in) + ADP + phosphate + H(+). In terms of biological role, part of the ABC transporter complex RbsABC involved in ribose import. Responsible for energy coupling to the transport system. The chain is Ribose import ATP-binding protein RbsA from Lacticaseibacillus paracasei (strain ATCC 334 / BCRC 17002 / CCUG 31169 / CIP 107868 / KCTC 3260 / NRRL B-441) (Lactobacillus paracasei).